The sequence spans 211 residues: Uracil phosphoribosyltransferase (211 aa).

Residues Arg78, Arg103, and 130–138 each bind 5-phospho-alpha-D-ribose 1-diphosphate; that span reads DPMLATGGT. Uracil contacts are provided by residues Ile195 and 200 to 202; that span reads GDA. Residue Asp201 coordinates 5-phospho-alpha-D-ribose 1-diphosphate.

This sequence belongs to the UPRTase family. It depends on Mg(2+) as a cofactor.

It catalyses the reaction UMP + diphosphate = 5-phospho-alpha-D-ribose 1-diphosphate + uracil. It participates in pyrimidine metabolism; UMP biosynthesis via salvage pathway; UMP from uracil: step 1/1. Allosterically activated by GTP. Catalyzes the conversion of uracil and 5-phospho-alpha-D-ribose 1-diphosphate (PRPP) to UMP and diphosphate. The chain is Uracil phosphoribosyltransferase from Arthrobacter sp. (strain FB24).